Reading from the N-terminus, the 100-residue chain is Glutamyl-tRNA(Gln) amidotransferase subunit C (100 aa).

Belongs to the GatC family. Heterotrimer of A, B and C subunits.

The enzyme catalyses L-glutamyl-tRNA(Gln) + L-glutamine + ATP + H2O = L-glutaminyl-tRNA(Gln) + L-glutamate + ADP + phosphate + H(+). It carries out the reaction L-aspartyl-tRNA(Asn) + L-glutamine + ATP + H2O = L-asparaginyl-tRNA(Asn) + L-glutamate + ADP + phosphate + 2 H(+). In terms of biological role, allows the formation of correctly charged Asn-tRNA(Asn) or Gln-tRNA(Gln) through the transamidation of misacylated Asp-tRNA(Asn) or Glu-tRNA(Gln) in organisms which lack either or both of asparaginyl-tRNA or glutaminyl-tRNA synthetases. The reaction takes place in the presence of glutamine and ATP through an activated phospho-Asp-tRNA(Asn) or phospho-Glu-tRNA(Gln). The chain is Glutamyl-tRNA(Gln) amidotransferase subunit C from Streptococcus pyogenes serotype M1.